We begin with the raw amino-acid sequence, 199 residues long: Large ribosomal subunit protein bL25 (199 aa).

It belongs to the bacterial ribosomal protein bL25 family. CTC subfamily. In terms of assembly, part of the 50S ribosomal subunit; part of the 5S rRNA/L5/L18/L25 subcomplex. Contacts the 5S rRNA. Binds to the 5S rRNA independently of L5 and L18.

This is one of the proteins that binds to the 5S RNA in the ribosome where it forms part of the central protuberance. The polypeptide is Large ribosomal subunit protein bL25 (Pelobacter propionicus (strain DSM 2379 / NBRC 103807 / OttBd1)).